The following is a 34-amino-acid chain: Photosystem II reaction center protein M (34 aa).

A helical transmembrane segment spans residues 5–25 (ILAFIATALFILVPTAFLLII).

Belongs to the PsbM family. As to quaternary structure, PSII is composed of 1 copy each of membrane proteins PsbA, PsbB, PsbC, PsbD, PsbE, PsbF, PsbH, PsbI, PsbJ, PsbK, PsbL, PsbM, PsbT, PsbX, PsbY, PsbZ, Psb30/Ycf12, at least 3 peripheral proteins of the oxygen-evolving complex and a large number of cofactors. It forms dimeric complexes.

Its subcellular location is the plastid. It is found in the chloroplast thylakoid membrane. One of the components of the core complex of photosystem II (PSII). PSII is a light-driven water:plastoquinone oxidoreductase that uses light energy to abstract electrons from H(2)O, generating O(2) and a proton gradient subsequently used for ATP formation. It consists of a core antenna complex that captures photons, and an electron transfer chain that converts photonic excitation into a charge separation. This subunit is found at the monomer-monomer interface. The chain is Photosystem II reaction center protein M from Coffea arabica (Arabian coffee).